We begin with the raw amino-acid sequence, 71 residues long: Pro-MCH (71 aa).

The N-terminal stretch at 1-20 is a signal peptide; sequence AKMNLSSYILILTFSLFSQG.

The protein belongs to the melanin-concentrating hormone family.

It localises to the secreted. The chain is Pro-MCH (PMCH) from Pan paniscus (Pygmy chimpanzee).